Consider the following 129-residue polypeptide: 3-aminoacrylate deaminase RutC (129 aa).

It belongs to the RutC family.

It catalyses the reaction (Z)-3-aminoacrylate + H2O + H(+) = 3-oxopropanoate + NH4(+). Functionally, involved in pyrimidine catabolism. Catalyzes the deamination of 3-aminoacrylate to malonic semialdehyde, a reaction that can also occur spontaneously. RutC may facilitate the reaction and modulate the metabolic fitness, rather than catalyzing essential functions. This is 3-aminoacrylate deaminase RutC from Caulobacter sp. (strain K31).